A 300-amino-acid polypeptide reads, in one-letter code: Formyltetrahydrofolate deformylase (300 aa).

In terms of domain architecture, ACT spans 21–102 (RLLVSCPDQP…MTWSLTLASE (82 aa)). Residue aspartate 244 is part of the active site.

This sequence belongs to the PurU family.

It carries out the reaction (6R)-10-formyltetrahydrofolate + H2O = (6S)-5,6,7,8-tetrahydrofolate + formate + H(+). Its pathway is purine metabolism; IMP biosynthesis via de novo pathway; formate from 10-formyl-5,6,7,8-tetrahydrofolate: step 1/1. Functionally, catalyzes the hydrolysis of 10-formyltetrahydrofolate (formyl-FH4) to formate and tetrahydrofolate (FH4). The protein is Formyltetrahydrofolate deformylase of Bacillus subtilis (strain 168).